The sequence spans 409 residues: Glutamyl-tRNA reductase (409 aa).

Residues 48-51, Ser89, 94-96, and Gln100 contribute to the substrate site; these read TCNR and ENE. Cys49 acts as the Nucleophile in catalysis. 165–170 is a binding site for NADP(+); sequence GNGMLA.

This sequence belongs to the glutamyl-tRNA reductase family. As to quaternary structure, homodimer.

It catalyses the reaction (S)-4-amino-5-oxopentanoate + tRNA(Glu) + NADP(+) = L-glutamyl-tRNA(Glu) + NADPH + H(+). Its pathway is porphyrin-containing compound metabolism; protoporphyrin-IX biosynthesis; 5-aminolevulinate from L-glutamyl-tRNA(Glu): step 1/2. In terms of biological role, catalyzes the NADPH-dependent reduction of glutamyl-tRNA(Glu) to glutamate 1-semialdehyde (GSA). In Thermoplasma volcanium (strain ATCC 51530 / DSM 4299 / JCM 9571 / NBRC 15438 / GSS1), this protein is Glutamyl-tRNA reductase.